A 565-amino-acid polypeptide reads, in one-letter code: Thiol:disulfide interchange protein DsbD (565 aa).

The N-terminal stretch at M1 to A19 is a signal peptide. Residues G20–Q162 lie on the Periplasmic side of the membrane. Disulfide bonds link C122/C128 and C182/C304. The chain crosses the membrane as a helical span at residues L163–V183. Over L184–L207 the chain is Cytoplasmic. Residues L208–V228 form a helical membrane-spanning segment. Residues A229–P242 lie on the Periplasmic side of the membrane. The chain crosses the membrane as a helical span at residues Y243 to L263. The Cytoplasmic portion of the chain corresponds to T264–T295. A helical membrane pass occupies residues I296–I316. The Periplasmic segment spans residues A317–M322. Residues W323–I343 form a helical membrane-spanning segment. The Cytoplasmic segment spans residues T344–P356. The chain crosses the membrane as a helical span at residues W357–L377. At E378 to D383 the chain is on the periplasmic side. A helical transmembrane segment spans residues V384–T404. Over S405–Q417 the chain is Cytoplasmic. Residues I418–A438 form a helical membrane-spanning segment. Residues W434 to P565 form the Thioredoxin domain. Residues T439–P565 are Periplasmic-facing. A disulfide bridge connects residues C480 and C483.

It belongs to the thioredoxin family. DsbD subfamily.

The protein localises to the cell inner membrane. The catalysed reaction is [protein]-dithiol + NAD(+) = [protein]-disulfide + NADH + H(+). It carries out the reaction [protein]-dithiol + NADP(+) = [protein]-disulfide + NADPH + H(+). In terms of biological role, required to facilitate the formation of correct disulfide bonds in some periplasmic proteins and for the assembly of the periplasmic c-type cytochromes. Acts by transferring electrons from cytoplasmic thioredoxin to the periplasm. This transfer involves a cascade of disulfide bond formation and reduction steps. This is Thiol:disulfide interchange protein DsbD from Escherichia coli O157:H7.